Reading from the N-terminus, the 556-residue chain is 2-succinyl-5-enolpyruvyl-6-hydroxy-3-cyclohexene-1-carboxylate synthase (556 aa).

Belongs to the TPP enzyme family. MenD subfamily. As to quaternary structure, homodimer. Mg(2+) is required as a cofactor. Mn(2+) serves as cofactor. Requires thiamine diphosphate as cofactor.

The enzyme catalyses isochorismate + 2-oxoglutarate + H(+) = 5-enolpyruvoyl-6-hydroxy-2-succinyl-cyclohex-3-ene-1-carboxylate + CO2. Its pathway is quinol/quinone metabolism; 1,4-dihydroxy-2-naphthoate biosynthesis; 1,4-dihydroxy-2-naphthoate from chorismate: step 2/7. It participates in quinol/quinone metabolism; menaquinone biosynthesis. Its function is as follows. Catalyzes the thiamine diphosphate-dependent decarboxylation of 2-oxoglutarate and the subsequent addition of the resulting succinic semialdehyde-thiamine pyrophosphate anion to isochorismate to yield 2-succinyl-5-enolpyruvyl-6-hydroxy-3-cyclohexene-1-carboxylate (SEPHCHC). This is 2-succinyl-5-enolpyruvyl-6-hydroxy-3-cyclohexene-1-carboxylate synthase from Staphylococcus haemolyticus (strain JCSC1435).